The chain runs to 1468 residues: DNA-directed RNA polymerase subunit beta (1468 aa).

Belongs to the RNA polymerase beta chain family. As to quaternary structure, the RNAP catalytic core consists of 2 alpha, 1 beta, 1 beta' and 1 omega subunit. When a sigma factor is associated with the core the holoenzyme is formed, which can initiate transcription.

The enzyme catalyses RNA(n) + a ribonucleoside 5'-triphosphate = RNA(n+1) + diphosphate. Functionally, DNA-dependent RNA polymerase catalyzes the transcription of DNA into RNA using the four ribonucleoside triphosphates as substrates. In Aquifex aeolicus (strain VF5), this protein is DNA-directed RNA polymerase subunit beta.